A 503-amino-acid polypeptide reads, in one-letter code: MEEHGVTQTEHMATIEAHAVAQQVQQVHVATYTEHSMLSADEDSPSSPEDTSYDDSDILNSTAADEVTAHLAAAGPVGMAAAAAVATGKKRKRPHVFESNPSIRKRQQTRLLRKLRATLDEYTTRVGQQAIVLCISPSKPNPVFKVFGAAPLENVVRKYKSMILEDLESALAEHAPAPQEVNSELPPLTIDGIPVSVDKMTQAQLRAFIPEMLKYSTGRGKPGWGKESCKPIWWPEDIPWANVRSDVRTEEQKQRVSWTQALRTIVKNCYKQHGREDLLYAFEDQQTQTQATTTHSIAHLVPSQTVVQTFSNPDGTVSLIQVGTGATVATLADASELPTTVTVAQVNYSAVADGEVEQNWATLQGGEMTIQTTQASEATQAVASLAEAAVAASQEMQQGATVTMALNSEAAAHAVATLAEATLQGGGQIVLSGETAAAVGALTGVQDANGLVQIPVSMYQTVVTSLAQGNGPVQVAMAPVTTRISDSAVTMDGQAVEVVTLEQ.

Residues 1–78 are dimerization; the sequence is MEEHGVTQTE…AHLAAAGPVG (78 aa). The segment at 36 to 57 is disordered; that stretch reads SMLSADEDSPSSPEDTSYDDSD. Residues serine 39, serine 44, serine 46, serine 47, and serine 52 each carry the phosphoserine; by CK2 modification. Positions 88–116 match the Nuclear localization signal motif; it reads GKKRKRPHVFESNPSIRKRQQTRLLRKLR. The DNA-binding element occupies 109–305; sequence TRLLRKLRAT…SIAHLVPSQT (197 aa). Lysine 139 participates in a covalent cross-link: Glycyl lysine isopeptide (Lys-Gly) (interchain with G-Cter in SUMO2). The required for transcriptional activation stretch occupies residues 301-476; sequence VPSQTVVQTF…AQGNGPVQVA (176 aa).

Belongs to the NRF1/Ewg family. As to quaternary structure, homodimer. Binds DNA as a dimer. Interacts with PPRC1. Post-translationally, phosphorylation enhances DNA binding. In terms of tissue distribution, widely expressed in embryonic, fetal, and adult tissues.

It is found in the nucleus. Transcription factor that activates the expression of the EIF2S1 (EIF2-alpha) gene. Links the transcriptional modulation of key metabolic genes to cellular growth and development. Implicated in the control of nuclear genes required for respiration, heme biosynthesis, and mitochondrial DNA transcription and replication. This chain is Nuclear respiratory factor 1 (Nrf1), found in Mus musculus (Mouse).